A 234-amino-acid chain; its full sequence is Redox-sensing transcriptional repressor Rex (234 aa).

A DNA-binding region (H-T-H motif) is located at residues 17–56; that stretch reads TYIRVLEELEAQNVLRASSGELARRAGVTPFQVRKDLTYF. Position 91-96 (91-96) interacts with NAD(+); it reads GMGRLG.

Belongs to the transcriptional regulatory Rex family. Homodimer.

Its subcellular location is the cytoplasm. Its function is as follows. Modulates transcription in response to changes in cellular NADH/NAD(+) redox state. The chain is Redox-sensing transcriptional repressor Rex from Deinococcus radiodurans (strain ATCC 13939 / DSM 20539 / JCM 16871 / CCUG 27074 / LMG 4051 / NBRC 15346 / NCIMB 9279 / VKM B-1422 / R1).